A 2617-amino-acid polypeptide reads, in one-letter code: DNA-directed RNA polymerase subunit beta'' (2617 aa).

Cys263, Cys334, Cys341, and Cys344 together coordinate Zn(2+).

The protein belongs to the RNA polymerase beta' chain family. RpoC2 subfamily. As to quaternary structure, in plastids the minimal PEP RNA polymerase catalytic core is composed of four subunits: alpha, beta, beta', and beta''. When a (nuclear-encoded) sigma factor is associated with the core the holoenzyme is formed, which can initiate transcription. Requires Zn(2+) as cofactor.

The protein localises to the plastid. It is found in the chloroplast. It catalyses the reaction RNA(n) + a ribonucleoside 5'-triphosphate = RNA(n+1) + diphosphate. Its function is as follows. DNA-dependent RNA polymerase catalyzes the transcription of DNA into RNA using the four ribonucleoside triphosphates as substrates. The sequence is that of DNA-directed RNA polymerase subunit beta'' from Oedogonium cardiacum (Filamentous green alga).